Reading from the N-terminus, the 390-residue chain is GTPase Obg (390 aa).

The Obg domain maps to 1–159; sequence MKFIDEALIR…RDLQLELMLL (159 aa). In terms of domain architecture, OBG-type G spans 160–333; sequence ADVGMLGLPN…LCRDIMDFIE (174 aa). Residues 166-173, 191-195, 213-216, 283-286, and 314-316 each bind GTP; these read GLPNAGKS, FTTLV, DIPG, NKID, and SAV. Mg(2+) is bound by residues Ser173 and Thr193. The segment at 363-390 is disordered; sequence DHQFEDEDEDWDDWSEEDEEGVETIYKP. Over residues 366–384 the composition is skewed to acidic residues; that stretch reads FEDEDEDWDDWSEEDEEGV.

It belongs to the TRAFAC class OBG-HflX-like GTPase superfamily. OBG GTPase family. Monomer. Requires Mg(2+) as cofactor.

It localises to the cytoplasm. Its function is as follows. An essential GTPase which binds GTP, GDP and possibly (p)ppGpp with moderate affinity, with high nucleotide exchange rates and a fairly low GTP hydrolysis rate. Plays a role in control of the cell cycle, stress response, ribosome biogenesis and in those bacteria that undergo differentiation, in morphogenesis control. The sequence is that of GTPase Obg from Pasteurella multocida (strain Pm70).